Reading from the N-terminus, the 137-residue chain is NADH dehydrogenase [ubiquinone] 1 beta subcomplex subunit 7 (137 aa).

A lipid anchor (N-myristoyl glycine) is attached at Gly-2. The region spanning 56–98 (RDYCAHYLIRLLKCKRDSFPNFLACKQERHDWDYCEHRDYVMR) is the CHCH domain. A Cx9C motif 1 motif is present at residues 59–69 (CAHYLIRLLKC). Disulfide bonds link Cys-59–Cys-90 and Cys-69–Cys-80. Ser-73 carries the phosphoserine modification. Residues 80–90 (CKQERHDWDYC) carry the Cx9C motif 2 motif. A disordered region spans residues 113–137 (KRREKKAAELAKGQGPGEVDPKVAL).

It belongs to the complex I NDUFB7 subunit family. In terms of assembly, complex I is composed of 45 different subunits.

The protein resides in the mitochondrion inner membrane. It localises to the mitochondrion intermembrane space. In terms of biological role, accessory subunit of the mitochondrial membrane respiratory chain NADH dehydrogenase (Complex I), that is believed not to be involved in catalysis. Complex I functions in the transfer of electrons from NADH to the respiratory chain. The immediate electron acceptor for the enzyme is believed to be ubiquinone. The protein is NADH dehydrogenase [ubiquinone] 1 beta subcomplex subunit 7 (NDUFB7) of Gorilla gorilla gorilla (Western lowland gorilla).